A 350-amino-acid chain; its full sequence is Small-conductance mechanosensitive channel MscMJ (350 aa).

5 consecutive transmembrane segments (helical) span residues 10 to 30, 59 to 79, 91 to 111, 130 to 150, and 154 to 174; these read ISNILIFVVITLLGIFIGKIV, LPIIVLVVTLFFYFGLRFLIL, VKVVVILSATYFAVKFIDGIF, IIKPLKKVVKILTILLGILTA, and VGYDITALLAGLGVGGLALAL.

It belongs to the MscS (TC 1.A.23) family.

Its subcellular location is the cell membrane. Functionally, small-conductance mechanosensitive channel that opens in response to stretch forces in the membrane lipid bilayer. Exhibits a sixfold preference for cations over anions. Non-rectifying. This chain is Small-conductance mechanosensitive channel MscMJ, found in Methanocaldococcus jannaschii (strain ATCC 43067 / DSM 2661 / JAL-1 / JCM 10045 / NBRC 100440) (Methanococcus jannaschii).